The following is a 181-amino-acid chain: Putative manganese efflux pump MntP (181 aa).

The next 6 membrane-spanning stretches (helical) occupy residues 3–23 (LIFL…ANGA), 42–62 (IFQA…VGFI), 63–83 (SYID…KMIK), 101–121 (LMLG…TFSF), 124–144 (INIA…CVIA), and 160–180 (LVLG…THLI).

The protein belongs to the MntP (TC 9.B.29) family.

It is found in the cell inner membrane. Its function is as follows. Probably functions as a manganese efflux pump. The chain is Putative manganese efflux pump MntP from Campylobacter fetus subsp. fetus (strain 82-40).